Reading from the N-terminus, the 429-residue chain is Carbamoyl phosphate synthase arginine-specific small chain (429 aa).

Residues 1 to 20 (MIRVIQPPLIASKQLFRRYL) constitute a mitochondrion transit peptide. The Glutamine amidotransferase type-1 domain maps to 218-406 (HIAVLDCGAK…FENIEQYRAT (189 aa)). The Nucleophile role is filled by C295. Active-site residues include H379 and E381.

The protein belongs to the CarA family. As to quaternary structure, heterodimer composed of 2 chains; the small (or glutamine) chain promotes the hydrolysis of glutamine to ammonia, which is used by the large (or ammonia) chain to synthesize carbamoyl phosphate.

The protein resides in the mitochondrion matrix. It carries out the reaction hydrogencarbonate + L-glutamine + 2 ATP + H2O = carbamoyl phosphate + L-glutamate + 2 ADP + phosphate + 2 H(+). The catalysed reaction is L-glutamine + H2O = L-glutamate + NH4(+). Its pathway is amino-acid biosynthesis; L-arginine biosynthesis; carbamoyl phosphate from bicarbonate: step 1/1. Functionally, small subunit of the arginine-specific carbamoyl phosphate synthase (CPSase). CPSase catalyzes the formation of carbamoyl phosphate from the ammonia moiety of glutamine, carbonate, and phosphate donated by ATP, the first step of the arginine biosynthetic pathway. The small subunit (glutamine amidotransferase) binds and cleaves glutamine to supply the large subunit with the substrate ammonia. The polypeptide is Carbamoyl phosphate synthase arginine-specific small chain (CPA1) (Debaryomyces hansenii (strain ATCC 36239 / CBS 767 / BCRC 21394 / JCM 1990 / NBRC 0083 / IGC 2968) (Yeast)).